A 64-amino-acid polypeptide reads, in one-letter code: Metallothionein (64 aa).

Belongs to the metallothionein superfamily. Type 4 family.

Its function is as follows. Metallothioneins have a high content of cysteine residues that bind various heavy metals. In Sterechinus neumayeri (Antarctic sea urchin), this protein is Metallothionein.